Reading from the N-terminus, the 429-residue chain is Cell wall protein ECM33 (429 aa).

Positions 1–19 (MQFKNALTATAILSASALA) are cleaved as a signal peptide. Residues Asn21, Asn56, Asn82, Asn196, Asn209, Asn227, Asn234, Asn241, Asn267, Asn279, Asn304, and Asn328 are each glycosylated (N-linked (GlcNAc...) asparagine). Ser339 bears the Phosphoserine mark. Positions 361-401 (LSSTSTESSKSSATSSASSSGDASNAQANVSASASSSSSSS) are enriched in low complexity. The disordered stretch occupies residues 361–410 (LSSTSTESSKSSATSSASSSGDASNAQANVSASASSSSSSSKKSKGAAPE). Asn389 carries an N-linked (GlcNAc...) asparagine glycan. Gly406 carries GPI-anchor amidated glycine lipidation. The propeptide at 407–429 (AAPELVPATSFMGVVAAVGVALL) is removed in mature form.

Belongs to the SPS2 family. Post-translationally, the GPI-anchor is attached to the protein in the endoplasmic reticulum and serves to target the protein to the cell surface. There, the glucosamine-inositol phospholipid moiety is cleaved off and the GPI-modified mannoprotein is covalently attached via its lipidless GPI glycan remnant to the 1,6-beta-glucan of the outer cell wall layer. Extensively N-glycosylated.

Its subcellular location is the cell membrane. The protein localises to the secreted. It localises to the cell wall. In terms of biological role, required for proper cell wall integrity and for the correct assembly of the mannoprotein outer layer of the cell wall. Important for apical bud growth. This chain is Cell wall protein ECM33 (ECM33), found in Saccharomyces cerevisiae (strain ATCC 204508 / S288c) (Baker's yeast).